The sequence spans 611 residues: Pescadillo homolog (611 aa).

The interval 310–335 (VQMGDPDEASPGEEEQFVAHASKSAP) is disordered. Acidic residues predominate over residues 314–325 (DPDEASPGEEEQ). The 102-residue stretch at 354–455 (PSSRLFAPYT…KILLEDTYAQ (102 aa)) folds into the BRCT domain. Disordered stretches follow at residues 469–506 (YEGAYDPTAATNDADMDVETDGEEGEADASGDEKESNT) and 545–611 (VKKA…AGGK). A compositionally biased stretch (acidic residues) spans 482 to 498 (ADMDVETDGEEGEADAS). Composition is skewed to basic and acidic residues over residues 552–569 (KKPDTASKATEEAEKDMN) and 579–602 (KLYEKMKYSQQKKAAEKEKLEQRK). Residues 580–609 (LYEKMKYSQQKKAAEKEKLEQRKKQLQKAG) are a coiled coil.

It belongs to the pescadillo family. Component of the NOP7 complex, composed of ERB1, NOP7 and YTM1. The complex is held together by ERB1, which interacts with NOP7 via its N-terminal domain and with YTM1 via a high-affinity interaction between the seven-bladed beta-propeller domains of the 2 proteins. The NOP7 complex associates with the 66S pre-ribosome.

The protein resides in the nucleus. Its subcellular location is the nucleolus. It is found in the nucleoplasm. Its function is as follows. Component of the NOP7 complex, which is required for maturation of the 25S and 5.8S ribosomal RNAs and formation of the 60S ribosome. This is Pescadillo homolog from Coprinopsis cinerea (strain Okayama-7 / 130 / ATCC MYA-4618 / FGSC 9003) (Inky cap fungus).